We begin with the raw amino-acid sequence, 553 residues long: Formate--tetrahydrofolate ligase (553 aa).

Thr-64–Thr-71 lines the ATP pocket.

It belongs to the formate--tetrahydrofolate ligase family.

The enzyme catalyses (6S)-5,6,7,8-tetrahydrofolate + formate + ATP = (6R)-10-formyltetrahydrofolate + ADP + phosphate. It participates in one-carbon metabolism; tetrahydrofolate interconversion. This Pseudothermotoga lettingae (strain ATCC BAA-301 / DSM 14385 / NBRC 107922 / TMO) (Thermotoga lettingae) protein is Formate--tetrahydrofolate ligase.